A 121-amino-acid chain; its full sequence is Iron-sulfur cluster assembly protein CyaY (121 aa).

It belongs to the frataxin family.

Involved in iron-sulfur (Fe-S) cluster assembly. May act as a regulator of Fe-S biogenesis. This is Iron-sulfur cluster assembly protein CyaY from Buchnera aphidicola subsp. Schizaphis graminum (strain Sg).